Here is a 235-residue protein sequence, read N- to C-terminus: Putative N-acetylmannosamine-6-phosphate 2-epimerase (235 aa).

It belongs to the NanE family.

It carries out the reaction an N-acyl-D-glucosamine 6-phosphate = an N-acyl-D-mannosamine 6-phosphate. Its pathway is amino-sugar metabolism; N-acetylneuraminate degradation; D-fructose 6-phosphate from N-acetylneuraminate: step 3/5. Its function is as follows. Converts N-acetylmannosamine-6-phosphate (ManNAc-6-P) to N-acetylglucosamine-6-phosphate (GlcNAc-6-P). This Photobacterium profundum (strain SS9) protein is Putative N-acetylmannosamine-6-phosphate 2-epimerase.